We begin with the raw amino-acid sequence, 115 residues long: Virion membrane protein OPG147 (115 aa).

A helical; Signal-anchor for type III membrane protein transmembrane segment spans residues 1-21 (MITLFLILCYFILIFNIIVPA).

It belongs to the orthopoxvirus OPG147 family. As to quaternary structure, part of a stable entry-fusion complex (EFC) which is at least composed of proteins OPG143, OPG147, OPG155, OPG086, OPG094, OPG107, OPG104, and OPG099. Formation of the viral membrane is necessary for the assembly of the complex. In terms of processing, contains two intramolecular disulfide bonds. They are created by the viral disulfide bond formation pathway, a poxvirus-specific pathway that operates on the cytoplasmic side of the MV membranes.

It is found in the virion membrane. Functionally, envelope protein part of the entry-fusion complex responsible for the virus membrane fusion with host cell membrane during virus entry. Also plays a role in cell-cell fusion (syncytium formation). This chain is Virion membrane protein OPG147 (OPG147), found in Monkeypox virus.